The sequence spans 258 residues: Ribosomal RNA small subunit methyltransferase A (258 aa).

The S-adenosyl-L-methionine site is built by H13, L15, G40, E62, D87, and N108.

The protein belongs to the class I-like SAM-binding methyltransferase superfamily. rRNA adenine N(6)-methyltransferase family. RsmA subfamily.

It is found in the cytoplasm. The catalysed reaction is adenosine(1518)/adenosine(1519) in 16S rRNA + 4 S-adenosyl-L-methionine = N(6)-dimethyladenosine(1518)/N(6)-dimethyladenosine(1519) in 16S rRNA + 4 S-adenosyl-L-homocysteine + 4 H(+). Its function is as follows. Specifically dimethylates two adjacent adenosines (A1518 and A1519) in the loop of a conserved hairpin near the 3'-end of 16S rRNA in the 30S particle. May play a critical role in biogenesis of 30S subunits. The polypeptide is Ribosomal RNA small subunit methyltransferase A (Sulfurihydrogenibium sp. (strain YO3AOP1)).